Consider the following 402-residue polypeptide: Nodulation protein E (402 aa).

The region spanning 2–401 is the Ketosynthase family 3 (KS3) domain; it reads DRRVVITGMG…GTNAVLAFKQ (400 aa). Active-site for beta-ketoacyl synthase activity residues include cysteine 162, histidine 294, and histidine 331. A helical transmembrane segment spans residues 329-348; sequence HAHCIGAASALEMIACVMAI.

This sequence belongs to the thiolase-like superfamily. Beta-ketoacyl-ACP synthases family.

The protein localises to the cell inner membrane. Proposed to synthesize NOD factor fatty acyl chain. Involved in the synthesis of a highly unsaturated fatty acid moiety, which forms part of a lipo-oligosaccharide that is responsible for host specificity. The polypeptide is Nodulation protein E (nodE) (Rhizobium meliloti (strain 1021) (Ensifer meliloti)).